A 1394-amino-acid polypeptide reads, in one-letter code: DNA-directed RNA polymerase subunit beta' (1394 aa).

Residues cysteine 71, cysteine 73, cysteine 86, and cysteine 89 each contribute to the Zn(2+) site. Residues aspartate 462, aspartate 464, and aspartate 466 each contribute to the Mg(2+) site. Cysteine 810, cysteine 884, cysteine 891, and cysteine 894 together coordinate Zn(2+).

Belongs to the RNA polymerase beta' chain family. As to quaternary structure, the RNAP catalytic core consists of 2 alpha, 1 beta, 1 beta' and 1 omega subunit. When a sigma factor is associated with the core the holoenzyme is formed, which can initiate transcription. Mg(2+) is required as a cofactor. Zn(2+) serves as cofactor.

It carries out the reaction RNA(n) + a ribonucleoside 5'-triphosphate = RNA(n+1) + diphosphate. Its function is as follows. DNA-dependent RNA polymerase catalyzes the transcription of DNA into RNA using the four ribonucleoside triphosphates as substrates. In Caulobacter sp. (strain K31), this protein is DNA-directed RNA polymerase subunit beta'.